A 199-amino-acid chain; its full sequence is Holliday junction branch migration complex subunit RuvA (199 aa).

Residues 1–63 (MIGKLNGKID…EEHIHLYGFL (63 aa)) form a domain I region. The domain II stretch occupies residues 64–141 (TLEEKNFFNL…TKIFSSSAII (78 aa)). The tract at residues 141–145 (IKDSN) is flexible linker. Positions 146-199 (ISSIAINEVMKALVNLGFTRFEAQNTVQGIITQNPKISIDELIKTALKNRNSSF) are domain III.

The protein belongs to the RuvA family. As to quaternary structure, homotetramer. Forms an RuvA(8)-RuvB(12)-Holliday junction (HJ) complex. HJ DNA is sandwiched between 2 RuvA tetramers; dsDNA enters through RuvA and exits via RuvB. An RuvB hexamer assembles on each DNA strand where it exits the tetramer. Each RuvB hexamer is contacted by two RuvA subunits (via domain III) on 2 adjacent RuvB subunits; this complex drives branch migration. In the full resolvosome a probable DNA-RuvA(4)-RuvB(12)-RuvC(2) complex forms which resolves the HJ.

The protein localises to the cytoplasm. The RuvA-RuvB-RuvC complex processes Holliday junction (HJ) DNA during genetic recombination and DNA repair, while the RuvA-RuvB complex plays an important role in the rescue of blocked DNA replication forks via replication fork reversal (RFR). RuvA specifically binds to HJ cruciform DNA, conferring on it an open structure. The RuvB hexamer acts as an ATP-dependent pump, pulling dsDNA into and through the RuvAB complex. HJ branch migration allows RuvC to scan DNA until it finds its consensus sequence, where it cleaves and resolves the cruciform DNA. The sequence is that of Holliday junction branch migration complex subunit RuvA from Rickettsia prowazekii (strain Madrid E).